A 220-amino-acid polypeptide reads, in one-letter code: uncharacterized protein (220 aa).

Positions 165 to 202 form a coiled coil; that stretch reads DKYEDLISDYNKIMEKYREVIKSEIEKYKALSKRKNDI.

This is an uncharacterized protein from Pasteurella multocida (strain Pm70).